The chain runs to 189 residues: Elongation factor P (189 aa).

This sequence belongs to the elongation factor P family.

It localises to the cytoplasm. Its pathway is protein biosynthesis; polypeptide chain elongation. Its function is as follows. Involved in peptide bond synthesis. Stimulates efficient translation and peptide-bond synthesis on native or reconstituted 70S ribosomes in vitro. Probably functions indirectly by altering the affinity of the ribosome for aminoacyl-tRNA, thus increasing their reactivity as acceptors for peptidyl transferase. In Rhizobium johnstonii (strain DSM 114642 / LMG 32736 / 3841) (Rhizobium leguminosarum bv. viciae), this protein is Elongation factor P.